The sequence spans 462 residues: Squalene synthase ERG9 (462 aa).

Residues 406–426 (AVVLFGVVIAALVCISGLMLG) traverse the membrane as a helical segment.

The protein belongs to the phytoene/squalene synthase family. Mg(2+) is required as a cofactor.

Its subcellular location is the endoplasmic reticulum membrane. The protein localises to the microsome. The catalysed reaction is 2 (2E,6E)-farnesyl diphosphate + NADPH + H(+) = squalene + 2 diphosphate + NADP(+). It carries out the reaction 2 (2E,6E)-farnesyl diphosphate + NADH + H(+) = squalene + 2 diphosphate + NAD(+). It functions in the pathway terpene metabolism; lanosterol biosynthesis; lanosterol from farnesyl diphosphate: step 1/3. Its pathway is steroid metabolism; ergosterol biosynthesis. In terms of biological role, squalene synthase; part of the third module of ergosterol biosynthesis pathway that includes the late steps of the pathway. ERG9 produces squalene from 2 farnesyl pyrophosphate moieties. The third module or late pathway involves the ergosterol synthesis itself through consecutive reactions that mainly occur in the endoplasmic reticulum (ER) membrane. Firstly, the squalene synthase ERG9 catalyzes the condensation of 2 farnesyl pyrophosphate moieties to form squalene, which is the precursor of all steroids. Squalene synthase is crucial for balancing the incorporation of farnesyl diphosphate (FPP) into sterol and nonsterol isoprene synthesis. Secondly, squalene is converted into lanosterol by the consecutive action of the squalene epoxidase ERG1 and the lanosterol synthase ERG7. Then, the delta(24)-sterol C-methyltransferase ERG6 methylates lanosterol at C-24 to produce eburicol. Eburicol is the substrate of the sterol 14-alpha demethylase encoded by CYP51A, CYP51B and CYP51C, to yield 4,4,24-trimethyl ergosta-8,14,24(28)-trienol. CYP51B encodes the enzyme primarily responsible for sterol 14-alpha-demethylation, and plays an essential role in ascospore formation. CYP51A encodes an additional sterol 14-alpha-demethylase, induced on ergosterol depletion and responsible for the intrinsic variation in azole sensitivity. The third CYP51 isoform, CYP51C, does not encode a sterol 14-alpha-demethylase, but is required for full virulence on host wheat ears. The C-14 reductase ERG24 then reduces the C14=C15 double bond which leads to 4,4-dimethylfecosterol. A sequence of further demethylations at C-4, involving the C-4 demethylation complex containing the C-4 methylsterol oxidases ERG25, the sterol-4-alpha-carboxylate 3-dehydrogenase ERG26 and the 3-keto-steroid reductase ERG27, leads to the production of fecosterol via 4-methylfecosterol. ERG28 has a role as a scaffold to help anchor ERG25, ERG26 and ERG27 to the endoplasmic reticulum. The C-8 sterol isomerase ERG2 then catalyzes the reaction which results in unsaturation at C-7 in the B ring of sterols and thus converts fecosterol to episterol. The sterol-C5-desaturases ERG3A and ERG3BB then catalyze the introduction of a C-5 double bond in the B ring to produce 5-dehydroepisterol. The C-22 sterol desaturases ERG5A and ERG5B further convert 5-dehydroepisterol into ergosta-5,7,22,24(28)-tetraen-3beta-ol by forming the C-22(23) double bond in the sterol side chain. Finally, ergosta-5,7,22,24(28)-tetraen-3beta-ol is substrate of the C-24(28) sterol reductase ERG4 to produce ergosterol. The protein is Squalene synthase ERG9 of Gibberella zeae (strain ATCC MYA-4620 / CBS 123657 / FGSC 9075 / NRRL 31084 / PH-1) (Wheat head blight fungus).